Reading from the N-terminus, the 285-residue chain is Diaminopimelate epimerase (285 aa).

Substrate contacts are provided by Asn15 and Asn68. Residue Cys77 is the Proton donor of the active site. Substrate is bound by residues 78–79 (GN), Asn165, Asn201, and 219–220 (ER). Catalysis depends on Cys228, which acts as the Proton acceptor. 229–230 (GT) is a substrate binding site.

Belongs to the diaminopimelate epimerase family. In terms of assembly, homodimer.

Its subcellular location is the cytoplasm. The catalysed reaction is (2S,6S)-2,6-diaminopimelate = meso-2,6-diaminopimelate. Its pathway is amino-acid biosynthesis; L-lysine biosynthesis via DAP pathway; DL-2,6-diaminopimelate from LL-2,6-diaminopimelate: step 1/1. Catalyzes the stereoinversion of LL-2,6-diaminopimelate (L,L-DAP) to meso-diaminopimelate (meso-DAP), a precursor of L-lysine and an essential component of the bacterial peptidoglycan. This is Diaminopimelate epimerase from Synechococcus sp. (strain JA-3-3Ab) (Cyanobacteria bacterium Yellowstone A-Prime).